Here is an 88-residue protein sequence, read N- to C-terminus: ATP synthase epsilon chain (88 aa).

Belongs to the ATPase epsilon chain family. As to quaternary structure, F-type ATPases have 2 components, CF(1) - the catalytic core - and CF(0) - the membrane proton channel. CF(1) has five subunits: alpha(3), beta(3), gamma(1), delta(1), epsilon(1). CF(0) has three main subunits: a, b and c.

The protein localises to the cell inner membrane. Produces ATP from ADP in the presence of a proton gradient across the membrane. In Chlorobaculum tepidum (strain ATCC 49652 / DSM 12025 / NBRC 103806 / TLS) (Chlorobium tepidum), this protein is ATP synthase epsilon chain (atpC).